The sequence spans 933 residues: Dual 3',5'-cyclic-AMP and -GMP phosphodiesterase 11A (933 aa).

Positions 42-125 (HSQGQGALGP…ASQKELRKSF (84 aa)) are disordered. Phosphoserine is present on residues Ser-162, Ser-163, and Ser-239. GAF domains are found at residues 217 to 370 (DLTS…GIAI) and 402 to 558 (DLEK…GLGI). Ser-424 is a binding site for 3',5'-cyclic GMP. Residues 588–912 (SKAEVDKFKA…SKWEELHQKR (325 aa)) form the PDEase domain. The active-site Proton donor is His-664. A divalent metal cation is bound by residues His-668, His-704, Asp-705, and Asp-816.

This sequence belongs to the cyclic nucleotide phosphodiesterase family. A divalent metal cation is required as a cofactor. In terms of tissue distribution, isoform 1 is present in prostate, pituitary, heart and liver. It is however not present in testis nor in penis, suggesting that weak inhibition by Tadalafil (Cialis) is not relevant (at protein level). Isoform 2 may be expressed in testis. Isoform 4 is expressed in adrenal cortex.

Its subcellular location is the cytoplasm. The protein localises to the cytosol. The catalysed reaction is 3',5'-cyclic GMP + H2O = GMP + H(+). The enzyme catalyses 3',5'-cyclic AMP + H2O = AMP + H(+). With respect to regulation, inhibited by 3-isobutyl-1-methylxanthine (IBMX), zaprinast and dipyridamole. cGMP acts as an allosteric activator. Weakly inhibited by Sildenafil (Viagra) and Tadalafil (Cialis); however, the fact that the protein is probably absent from testis, suggests that it is not biologically relevant and is not related with erectile dysfunction. In terms of biological role, plays a role in signal transduction by regulating the intracellular concentration of cyclic nucleotides cAMP and cGMP. Catalyzes the hydrolysis of both cAMP and cGMP to 5'-AMP and 5'-GMP, respectively. This chain is Dual 3',5'-cyclic-AMP and -GMP phosphodiesterase 11A, found in Homo sapiens (Human).